The sequence spans 341 residues: Uroporphyrinogen decarboxylase (341 aa).

Residues 26-30, aspartate 75, tyrosine 150, serine 205, and histidine 318 contribute to the substrate site; that span reads RQAGR.

This sequence belongs to the uroporphyrinogen decarboxylase family. In terms of assembly, homodimer.

The protein resides in the cytoplasm. It carries out the reaction uroporphyrinogen III + 4 H(+) = coproporphyrinogen III + 4 CO2. Its pathway is porphyrin-containing compound metabolism; protoporphyrin-IX biosynthesis; coproporphyrinogen-III from 5-aminolevulinate: step 4/4. In terms of biological role, catalyzes the decarboxylation of four acetate groups of uroporphyrinogen-III to yield coproporphyrinogen-III. In Thermus thermophilus (strain ATCC 27634 / DSM 579 / HB8), this protein is Uroporphyrinogen decarboxylase.